The primary structure comprises 117 residues: NADH-ubiquinone oxidoreductase chain 3 (117 aa).

Helical transmembrane passes span 4–24 (ILIYLLILLIINVVLLLLGLI), 57–77 (FFLLAVIFLIFDVEIILLLPL), and 88–108 (WPLTSSMIFLTILLIGLFHEW).

It belongs to the complex I subunit 3 family.

The protein resides in the mitochondrion membrane. It catalyses the reaction a ubiquinone + NADH + 5 H(+)(in) = a ubiquinol + NAD(+) + 4 H(+)(out). In terms of biological role, core subunit of the mitochondrial membrane respiratory chain NADH dehydrogenase (Complex I) that is believed to belong to the minimal assembly required for catalysis. Complex I functions in the transfer of electrons from NADH to the respiratory chain. The immediate electron acceptor for the enzyme is believed to be ubiquinone. The protein is NADH-ubiquinone oxidoreductase chain 3 (ND3) of Heterololigo bleekeri (Spear squid).